The sequence spans 413 residues: Mitochondrial carrier protein MTM1 (413 aa).

Solcar repeat units lie at residues 59–193 (IGFT…FRNR), 205–305 (MTFC…IKKR), and 318–406 (GVFG…VKYV). 6 consecutive transmembrane segments (helical) span residues 65 to 85 (VFSA…LDVV), 170 to 190 (NAGL…YDMF), 204 to 226 (AMTF…TVCY), 284 to 304 (QLAR…PIKK), 316 to 336 (LVGV…IAAA), and 378 to 399 (LFMG…VVSF).

This sequence belongs to the mitochondrial carrier (TC 2.A.29) family. As to expression, ubiquitous.

The protein resides in the mitochondrion inner membrane. Functionally, involved in the mitochondrial activation of MSD1 by specifically facilitating insertion of the essential manganese cofactor. Has the ability to activate iron regulon in an iron-dependent manner. The chain is Mitochondrial carrier protein MTM1 (MTM1) from Arabidopsis thaliana (Mouse-ear cress).